The primary structure comprises 408 residues: Argininosuccinate synthase (408 aa).

ATP contacts are provided by residues 12 to 20 and alanine 39; that span reads AYSGGLDTS. Residues tyrosine 92 and serine 97 each contribute to the L-citrulline site. Glycine 122 is a binding site for ATP. Threonine 124, asparagine 128, and aspartate 129 together coordinate L-aspartate. Asparagine 128 serves as a coordination point for L-citrulline. L-citrulline contacts are provided by arginine 132, serine 183, serine 192, glutamate 268, and tyrosine 280.

Belongs to the argininosuccinate synthase family. Type 1 subfamily. In terms of assembly, homotetramer.

It is found in the cytoplasm. It carries out the reaction L-citrulline + L-aspartate + ATP = 2-(N(omega)-L-arginino)succinate + AMP + diphosphate + H(+). It participates in amino-acid biosynthesis; L-arginine biosynthesis; L-arginine from L-ornithine and carbamoyl phosphate: step 2/3. The polypeptide is Argininosuccinate synthase (Caulobacter vibrioides (strain ATCC 19089 / CIP 103742 / CB 15) (Caulobacter crescentus)).